We begin with the raw amino-acid sequence, 750 residues long: GTP pyrophosphokinase rsh (750 aa).

The HD domain maps to 45-144 (YFSHPLEVAA…VKLADRLHNM (100 aa)). The TGS domain maps to 390 to 451 (DQVFCFTPKG…KNGDEVDIIR (62 aa)). A disordered region spans residues 587 to 613 (AAKVDPAATTPKPGKRALPIRGTNPDL). The region spanning 676 to 750 (RISVSAINSP…SVSSAKRVNG (75 aa)) is the ACT domain.

The protein belongs to the RelA/SpoT family.

It catalyses the reaction GTP + ATP = guanosine 3'-diphosphate 5'-triphosphate + AMP. Functionally, functions as a (p)ppGpp synthase. In eubacteria ppGpp (guanosine 3'-diphosphate 5'-diphosphate) is a mediator of the stringent response that coordinates a variety of cellular activities in response to changes in nutritional abundance. Plays a role in adaptation of Brucella to its intracellular host environment. In Brucella abortus (strain 2308), this protein is GTP pyrophosphokinase rsh (rsh).